Reading from the N-terminus, the 442-residue chain is Endothelin receptor type B (442 aa).

The first 26 residues, 1-26 (MQPPPSLCGRALVALVLACGLSRIWG), serve as a signal peptide directing secretion. The Extracellular portion of the chain corresponds to 27–101 (EERGFPPDRA…GSIEIKETFK (75 aa)). N-linked (GlcNAc...) asparagine glycosylation occurs at Asn59. Positions 69 to 88 (AEVPKGDRTAGSPPRTISPP) are disordered. A helical transmembrane segment spans residues 102 to 126 (YINTVVSCLVFVLGIIGNSTLLRII). Topologically, residues 127–137 (YKNKCMRNGPN) are cytoplasmic. A helical membrane pass occupies residues 138 to 163 (ILIASLALGDLLHIIIDIPITVYKLL). At 164-175 (AEDWPFGVEMCK) the chain is on the extracellular side. Cys174 and Cys255 are joined by a disulfide. Residues 176 to 197 (LVPFIQKASVGITVLSLCALSI) form a helical membrane-spanning segment. At 198-218 (DRYRAVASWSRIKGIGVPKWT) the chain is on the cytoplasmic side. The chain crosses the membrane as a helical span at residues 219 to 243 (AVEIVLIWVVSVVLAVPEAVGFDMI). Topologically, residues 244 to 271 (TIDYKGRYLRICLLHPTQKTAFMQFYKT) are extracellular. A helical membrane pass occupies residues 272–296 (AKDWWLFSFYFCLPLAITAFFYTLM). The Cytoplasmic portion of the chain corresponds to 297-324 (TCEMLRKKSGMQIALNDHLKQRREVAKT). Ser305 is modified (phosphoserine). The helical transmembrane segment at 325–350 (VFCLVLVFALCWLPLHLSRILKLTIY) threads the bilayer. At 351–362 (DQNDPNRCELLS) the chain is on the extracellular side. A helical transmembrane segment spans residues 363–389 (FLLVLDYIGINMASLNSCINPIALYLV). Residues 390 to 442 (SKRFKNCFKSCLCCWCQSFEEKQSLEEKQSCLKFKANDHGYDNFRSSNKYSSS) lie on the Cytoplasmic side of the membrane. Residues Cys402, Cys403, and Cys405 are each lipidated (S-palmitoyl cysteine). Ser419 carries the post-translational modification Phosphoserine. A Phosphotyrosine modification is found at Tyr439. Residues Ser440, Ser441, and Ser442 each carry the phosphoserine modification.

Belongs to the G-protein coupled receptor 1 family. Endothelin receptor subfamily. EDNRB sub-subfamily.

Its subcellular location is the cell membrane. Non-specific receptor for endothelin 1, 2, and 3. Mediates its action by association with G proteins that activate a phosphatidylinositol-calcium second messenger system. This chain is Endothelin receptor type B (EDNRB), found in Canis lupus familiaris (Dog).